The following is a 172-amino-acid chain: MSSSQNNNSSWIDWFLGIKGNQFLCRVPTDYVQDTFNQMGLEYFSEILDVILKPVIDSSSGLLYGDEKKWYGMIHARYIRSERGLIAMHRKYMRGDFGSCPNISCDRQNTLPVGVSAVWGKSTVKIHCPRCKSNFHPKSDTQLDGAMFGPSFPDIFFSMLPNLTSPLDDPRT.

This sequence belongs to the casein kinase 2 subunit beta family. Interacts in vitro with the casein kinase 2 alpha subunit (CkII-alpha). The relevance of such interaction is however unclear in vivo. Probably not expressed in wild-type flies. In males lacking the Y chromosome, it is testis-specific and constitutes the main component of star-shaped crystals.

Unknown. In males lacking the Y chromosome, its strong overexpression leads to the appearance of proteinaceous star-shaped crystals in the primary spermatocytes causing meiotic drive, possibly by interfering with normal casein kinase 2 activity. This chain is Stellate orphon protein at 12D (Ste12DOR), found in Drosophila melanogaster (Fruit fly).